The primary structure comprises 837 residues: Protein TRANSPARENT TESTA 9 (837 aa).

In terms of domain architecture, FPL spans 42 to 192 (LRSIAEILTY…AVRALTLNVY (151 aa)). The interval 366–386 (TEEANQQCSSTAAGMSDDGNS) is disordered. A compositionally biased stretch (polar residues) spans 368–378 (EANQQCSSTAA).

The protein belongs to the CLEC16A/gop-1 family.

It is found in the golgi apparatus membrane. Involved in membrane trafficking and vacuole development through membrane fusion at the vacuole. Required for membrane trafficking machinery and accumulation of flavonoids in the seed coat. The chain is Protein TRANSPARENT TESTA 9 from Arabidopsis thaliana (Mouse-ear cress).